The following is a 90-amino-acid chain: Probable small nuclear ribonucleoprotein F (90 aa).

A Sm domain is found at N7–A80.

This sequence belongs to the snRNP Sm proteins family. SmF/LSm6 subfamily.

The protein localises to the nucleus. The protein resides in the cytoplasm. In terms of biological role, plays a role in pre-mRNA splicing as a core component of the spliceosomal U1, U2, U4 and U5 small nuclear ribonucleoproteins (snRNPs), the building blocks of the spliceosome. This chain is Probable small nuclear ribonucleoprotein F, found in Neurospora crassa (strain ATCC 24698 / 74-OR23-1A / CBS 708.71 / DSM 1257 / FGSC 987).